We begin with the raw amino-acid sequence, 328 residues long: Eukaryotic translation initiation factor 3 subunit I (328 aa).

WD repeat units lie at residues 8–49 (GHER…GTYR), 50–89 (GHNGAVWCCDVSRDSSRLITGSADQTAKLWDVKSGKELFT), 146–185 (DGKKRINRAVWGPLNQTIVSGGEDKVIRIWDAETGKLLKQ), 191–230 (GHKKDITSLCKAADDSHFLTGSLDKTAKLWDMRTLTLLKT), and 288–327 (GHFGPINALAFNPDGKSFSSGGEDGYVRLHHFDSDYFNIK).

The protein belongs to the eIF-3 subunit I family. As to quaternary structure, component of the eukaryotic translation initiation factor 3 (eIF-3) complex.

The protein resides in the cytoplasm. In terms of biological role, component of the eukaryotic translation initiation factor 3 (eIF-3) complex, which is involved in protein synthesis of a specialized repertoire of mRNAs and, together with other initiation factors, stimulates binding of mRNA and methionyl-tRNAi to the 40S ribosome. The eIF-3 complex specifically targets and initiates translation of a subset of mRNAs involved in cell proliferation. This Arabidopsis thaliana (Mouse-ear cress) protein is Eukaryotic translation initiation factor 3 subunit I (TIF3I1).